The primary structure comprises 391 residues: Ferrochelatase (391 aa).

Positions 196 and 281 each coordinate Fe cation.

Belongs to the ferrochelatase family.

It localises to the cytoplasm. The enzyme catalyses heme b + 2 H(+) = protoporphyrin IX + Fe(2+). The protein operates within porphyrin-containing compound metabolism; protoheme biosynthesis; protoheme from protoporphyrin-IX: step 1/1. Its function is as follows. Catalyzes the ferrous insertion into protoporphyrin IX. This is Ferrochelatase from Prochlorococcus marinus (strain AS9601).